Consider the following 404-residue polypeptide: Argininosuccinate synthase (404 aa).

Residue 15–23 (AYSGGLDTS) participates in ATP binding. Position 94 (Tyr-94) interacts with L-citrulline. Gly-124 lines the ATP pocket. Thr-126, Asn-130, and Asp-131 together coordinate L-aspartate. Asn-130 is an L-citrulline binding site. Residues Arg-134, Ser-182, Glu-266, and Tyr-278 each contribute to the L-citrulline site.

Belongs to the argininosuccinate synthase family. Type 1 subfamily. As to quaternary structure, homotetramer.

It localises to the cytoplasm. It catalyses the reaction L-citrulline + L-aspartate + ATP = 2-(N(omega)-L-arginino)succinate + AMP + diphosphate + H(+). The protein operates within amino-acid biosynthesis; L-arginine biosynthesis; L-arginine from L-ornithine and carbamoyl phosphate: step 2/3. This chain is Argininosuccinate synthase, found in Streptomyces avermitilis (strain ATCC 31267 / DSM 46492 / JCM 5070 / NBRC 14893 / NCIMB 12804 / NRRL 8165 / MA-4680).